The following is a 603-amino-acid chain: Elongation factor 4 (603 aa).

Positions 7–191 constitute a tr-type G domain; that stretch reads DNIRNFSIVA…AIVTRLPPPK (185 aa). GTP contacts are provided by residues 19-24 and 138-141; these read DHGKST and NKVD.

Belongs to the TRAFAC class translation factor GTPase superfamily. Classic translation factor GTPase family. LepA subfamily.

It is found in the cell inner membrane. It catalyses the reaction GTP + H2O = GDP + phosphate + H(+). Required for accurate and efficient protein synthesis under certain stress conditions. May act as a fidelity factor of the translation reaction, by catalyzing a one-codon backward translocation of tRNAs on improperly translocated ribosomes. Back-translocation proceeds from a post-translocation (POST) complex to a pre-translocation (PRE) complex, thus giving elongation factor G a second chance to translocate the tRNAs correctly. Binds to ribosomes in a GTP-dependent manner. This chain is Elongation factor 4, found in Rhodopseudomonas palustris (strain BisA53).